The chain runs to 328 residues: Thiamine thiazole synthase (328 aa).

Residues A87, 108–109, G116, and V181 contribute to the substrate site; that span reads EA. Position 215 is a 2,3-didehydroalanine (Cys) (C215). Substrate-binding positions include D217, H232, M284, and 294–296; that span reads RMG.

This sequence belongs to the THI4 family. As to quaternary structure, homooctamer. Fe cation is required as a cofactor. During the catalytic reaction, a sulfide is transferred from Cys-215 to a reaction intermediate, generating a dehydroalanine residue.

It localises to the cytoplasm. It is found in the nucleus. The catalysed reaction is [ADP-thiazole synthase]-L-cysteine + glycine + NAD(+) = [ADP-thiazole synthase]-dehydroalanine + ADP-5-ethyl-4-methylthiazole-2-carboxylate + nicotinamide + 3 H2O + 2 H(+). Functionally, involved in biosynthesis of the thiamine precursor thiazole. Catalyzes the conversion of NAD and glycine to adenosine diphosphate 5-(2-hydroxyethyl)-4-methylthiazole-2-carboxylic acid (ADT), an adenylated thiazole intermediate. The reaction includes an iron-dependent sulfide transfer from a conserved cysteine residue of the protein to a thiazole intermediate. The enzyme can only undergo a single turnover, which suggests it is a suicide enzyme. May have additional roles in adaptation to various stress conditions and in DNA damage tolerance. This Schizosaccharomyces pombe (strain 972 / ATCC 24843) (Fission yeast) protein is Thiamine thiazole synthase (thi2).